The sequence spans 448 residues: Neurexin-1b-beta (448 aa).

An N-terminal signal peptide occupies residues 1–38 (MFGGWRLVVWQIFSEIITRRLGFWICLYFAALSVGMIS). Residues 39-375 (GSEPLVRTRH…EVFRESNGTT (337 aa)) lie on the Extracellular side of the membrane. Positions 71–269 (STYVFGRQGG…DPNVRMEGSV (199 aa)) constitute a Laminin G-like domain. Residues 376 to 396 (GMVVGIVAGAALCILILLYAM) traverse the membrane as a helical segment. Residues 397-448 (YKYRNRDEGSYHVDESRNYICNSNGAALKEKNTADDDSGSKSKKNKNKEYYV) are Cytoplasmic-facing. The span at 426 to 436 (EKNTADDDSGS) shows a compositional bias: basic and acidic residues. Residues 426 to 448 (EKNTADDDSGSKSKKNKNKEYYV) form a disordered region.

It belongs to the neurexin family.

The protein resides in the membrane. Functionally, neuronal cell surface protein that may be involved in cell recognition and cell adhesion. May play a role in formation or maintenance of synaptic junctions. In Danio rerio (Zebrafish), this protein is Neurexin-1b-beta (nrxn1b).